Here is an 86-residue protein sequence, read N- to C-terminus: Small ribosomal subunit protein bS16 (86 aa).

The protein belongs to the bacterial ribosomal protein bS16 family.

This is Small ribosomal subunit protein bS16 from Syntrophotalea carbinolica (strain DSM 2380 / NBRC 103641 / GraBd1) (Pelobacter carbinolicus).